The primary structure comprises 163 residues: Nucleotide-binding protein YajQ (163 aa).

It belongs to the YajQ family.

Its function is as follows. Nucleotide-binding protein. In Escherichia coli O81 (strain ED1a), this protein is Nucleotide-binding protein YajQ.